An 877-amino-acid polypeptide reads, in one-letter code: ABC transporter A family member 1 (877 aa).

Helical transmembrane passes span 46-66 (YFST…LFLI), 268-288 (VWGG…LLYK), 324-344 (ILIS…FFLG), 347-367 (FFVL…VAFF), 379-399 (IGIG…FSGM), 420-440 (IILF…IGNV), and 479-499 (LLAL…IIPG). One can recognise an ABC transporter domain in the interval 552-788 (LIICGLSKSY…YGEGYSVNIV (237 aa)). 591–598 (GSNGCGKS) provides a ligand contact to ATP.

It belongs to the ABC transporter superfamily. ABCA family.

The protein resides in the membrane. The polypeptide is ABC transporter A family member 1 (abcA1) (Dictyostelium discoideum (Social amoeba)).